The sequence spans 471 residues: Proline--tRNA ligase 2 (471 aa).

The protein belongs to the class-II aminoacyl-tRNA synthetase family. ProS type 3 subfamily. Homodimer.

It localises to the cytoplasm. It carries out the reaction tRNA(Pro) + L-proline + ATP = L-prolyl-tRNA(Pro) + AMP + diphosphate. Its function is as follows. Catalyzes the attachment of proline to tRNA(Pro) in a two-step reaction: proline is first activated by ATP to form Pro-AMP and then transferred to the acceptor end of tRNA(Pro). The chain is Proline--tRNA ligase 2 from Streptomyces avermitilis (strain ATCC 31267 / DSM 46492 / JCM 5070 / NBRC 14893 / NCIMB 12804 / NRRL 8165 / MA-4680).